The following is an 80-amino-acid chain: Exodeoxyribonuclease 7 small subunit (80 aa).

It belongs to the XseB family. In terms of assembly, heterooligomer composed of large and small subunits.

It localises to the cytoplasm. The enzyme catalyses Exonucleolytic cleavage in either 5'- to 3'- or 3'- to 5'-direction to yield nucleoside 5'-phosphates.. Its function is as follows. Bidirectionally degrades single-stranded DNA into large acid-insoluble oligonucleotides, which are then degraded further into small acid-soluble oligonucleotides. The chain is Exodeoxyribonuclease 7 small subunit from Salmonella paratyphi B (strain ATCC BAA-1250 / SPB7).